The primary structure comprises 271 residues: Type II restriction enzyme ScrFI (271 aa).

The catalysed reaction is Endonucleolytic cleavage of DNA to give specific double-stranded fragments with terminal 5'-phosphates.. Functionally, a P subtype restriction enzyme that recognizes the double-stranded sequence 5'-CCNGG-3' and cleaves after C-2. The sequence is that of Type II restriction enzyme ScrFI from Lactococcus lactis subsp. cremoris (Streptococcus cremoris).